The sequence spans 61 residues: Large ribosomal subunit protein uL30 (61 aa).

It belongs to the universal ribosomal protein uL30 family. Part of the 50S ribosomal subunit.

The protein is Large ribosomal subunit protein uL30 of Frankia alni (strain DSM 45986 / CECT 9034 / ACN14a).